Reading from the N-terminus, the 298-residue chain is Aspartate carbamoyltransferase catalytic subunit (298 aa).

Residues R53 and T54 each coordinate carbamoyl phosphate. K81 serves as a coordination point for L-aspartate. Positions 103, 132, and 135 each coordinate carbamoyl phosphate. R166 and R218 together coordinate L-aspartate. The carbamoyl phosphate site is built by G259 and P260.

Belongs to the aspartate/ornithine carbamoyltransferase superfamily. ATCase family. As to quaternary structure, heterododecamer (2C3:3R2) of six catalytic PyrB chains organized as two trimers (C3), and six regulatory PyrI chains organized as three dimers (R2).

It carries out the reaction carbamoyl phosphate + L-aspartate = N-carbamoyl-L-aspartate + phosphate + H(+). It functions in the pathway pyrimidine metabolism; UMP biosynthesis via de novo pathway; (S)-dihydroorotate from bicarbonate: step 2/3. Catalyzes the condensation of carbamoyl phosphate and aspartate to form carbamoyl aspartate and inorganic phosphate, the committed step in the de novo pyrimidine nucleotide biosynthesis pathway. In Anaplasma marginale (strain St. Maries), this protein is Aspartate carbamoyltransferase catalytic subunit.